A 595-amino-acid chain; its full sequence is Elongation factor 4 (595 aa).

The 182-residue stretch at 2–183 folds into the tr-type G domain; it reads KNIRNFCIIA…AIIERISPPT (182 aa). Residues 14–19 and 130–133 contribute to the GTP site; these read DHGKST and NKID.

The protein belongs to the TRAFAC class translation factor GTPase superfamily. Classic translation factor GTPase family. LepA subfamily.

Its subcellular location is the cell inner membrane. It carries out the reaction GTP + H2O = GDP + phosphate + H(+). Its function is as follows. Required for accurate and efficient protein synthesis under certain stress conditions. May act as a fidelity factor of the translation reaction, by catalyzing a one-codon backward translocation of tRNAs on improperly translocated ribosomes. Back-translocation proceeds from a post-translocation (POST) complex to a pre-translocation (PRE) complex, thus giving elongation factor G a second chance to translocate the tRNAs correctly. Binds to ribosomes in a GTP-dependent manner. The chain is Elongation factor 4 from Amoebophilus asiaticus (strain 5a2).